A 777-amino-acid polypeptide reads, in one-letter code: Santalene and bergamotene synthase, chloroplastic (777 aa).

The transit peptide at 1–36 directs the protein to the chloroplast; it reads MIVGYRSTIITLSHPKLGNGKTISSNAIFQRSCRVR. Residues D530 and D534 each coordinate Mg(2+). A DDXXD motif motif is present at residues 530–534; that stretch reads DDQFD.

The protein belongs to the terpene synthase family. Tpse subfamily. The cofactor is Mg(2+). Mn(2+) serves as cofactor.

It is found in the plastid. Its subcellular location is the chloroplast. It catalyses the reaction (2Z,6Z)-farnesyl diphosphate = (+)-alpha-santalene + diphosphate. It carries out the reaction (2Z,6Z)-farnesyl diphosphate = (+)-endo-beta-bergamotene + diphosphate. The enzyme catalyses (2Z,6Z)-farnesyl diphosphate = (1S,5S,6S)-alpha-bergamotene + diphosphate. Functionally, (2Z,6Z)-farnesyl diphosphate cyclizing enzyme. Produces (+)-alpha-santalene, (+)-endo-beta-bergamotene, (-)-endo-alpha-bergamotene, and at lower amounts, (-)exo-alpha-bergamotene and (+)-epi-beta-santalene. Not able to use geranyl diphosphate, E,E-farnesyl diphosphate or E,E,E-geranylgeranyl diphosphate as substrates, but able to use Neryl diphosphate to make the monoterpene terpineol. The polypeptide is Santalene and bergamotene synthase, chloroplastic (SBS) (Solanum habrochaites (Wild tomato)).